We begin with the raw amino-acid sequence, 358 residues long: UDP-N-acetylglucosamine--N-acetylmuramyl-(pentapeptide) pyrophosphoryl-undecaprenol N-acetylglucosamine transferase (358 aa).

Residues 11–13 (TGG), arginine 163, serine 191, isoleucine 245, and glutamine 290 contribute to the UDP-N-acetyl-alpha-D-glucosamine site.

It belongs to the glycosyltransferase 28 family. MurG subfamily.

Its subcellular location is the cell inner membrane. The enzyme catalyses di-trans,octa-cis-undecaprenyl diphospho-N-acetyl-alpha-D-muramoyl-L-alanyl-D-glutamyl-meso-2,6-diaminopimeloyl-D-alanyl-D-alanine + UDP-N-acetyl-alpha-D-glucosamine = di-trans,octa-cis-undecaprenyl diphospho-[N-acetyl-alpha-D-glucosaminyl-(1-&gt;4)]-N-acetyl-alpha-D-muramoyl-L-alanyl-D-glutamyl-meso-2,6-diaminopimeloyl-D-alanyl-D-alanine + UDP + H(+). It functions in the pathway cell wall biogenesis; peptidoglycan biosynthesis. Its function is as follows. Cell wall formation. Catalyzes the transfer of a GlcNAc subunit on undecaprenyl-pyrophosphoryl-MurNAc-pentapeptide (lipid intermediate I) to form undecaprenyl-pyrophosphoryl-MurNAc-(pentapeptide)GlcNAc (lipid intermediate II). The sequence is that of UDP-N-acetylglucosamine--N-acetylmuramyl-(pentapeptide) pyrophosphoryl-undecaprenol N-acetylglucosamine transferase from Herminiimonas arsenicoxydans.